Reading from the N-terminus, the 382-residue chain is Anhydro-N-acetylmuramic acid kinase (382 aa).

9–16 (GTSLDGID) is an ATP binding site.

Belongs to the anhydro-N-acetylmuramic acid kinase family.

The catalysed reaction is 1,6-anhydro-N-acetyl-beta-muramate + ATP + H2O = N-acetyl-D-muramate 6-phosphate + ADP + H(+). The protein operates within amino-sugar metabolism; 1,6-anhydro-N-acetylmuramate degradation. It participates in cell wall biogenesis; peptidoglycan recycling. Catalyzes the specific phosphorylation of 1,6-anhydro-N-acetylmuramic acid (anhMurNAc) with the simultaneous cleavage of the 1,6-anhydro ring, generating MurNAc-6-P. Is required for the utilization of anhMurNAc either imported from the medium or derived from its own cell wall murein, and thus plays a role in cell wall recycling. This is Anhydro-N-acetylmuramic acid kinase from Bacillus thuringiensis subsp. konkukian (strain 97-27).